A 149-amino-acid chain; its full sequence is VapC ribonuclease PF0355 (149 aa).

The PINc domain occupies 8–122 (TFDSLALIKM…ITDDSKRYEP (115 aa)). Residues Asp-10 and Asp-98 each coordinate Mg(2+).

This sequence belongs to the PINc/VapC protein family. Requires Mg(2+) as cofactor.

In terms of biological role, toxic component of a type II toxin-antitoxin (TA) system. An RNase. This Pyrococcus furiosus (strain ATCC 43587 / DSM 3638 / JCM 8422 / Vc1) protein is VapC ribonuclease PF0355.